Reading from the N-terminus, the 173-residue chain is Urease accessory protein UreE (173 aa).

The segment at 136 to 173 (PEGGAYAGSGQDHHDHSHGEHTQGEHTHDEAAEPHHHG) is disordered. Residues 146–173 (QDHHDHSHGEHTQGEHTHDEAAEPHHHG) are compositionally biased toward basic and acidic residues.

This sequence belongs to the UreE family.

The protein resides in the cytoplasm. Its function is as follows. Involved in urease metallocenter assembly. Binds nickel. Probably functions as a nickel donor during metallocenter assembly. The chain is Urease accessory protein UreE from Beijerinckia indica subsp. indica (strain ATCC 9039 / DSM 1715 / NCIMB 8712).